We begin with the raw amino-acid sequence, 283 residues long: Pantothenate synthetase (283 aa).

30–37 (MGNLHAGH) contacts ATP. H37 serves as the catalytic Proton donor. Q61 is a (R)-pantoate binding site. Q61 serves as a coordination point for beta-alanine. Position 149–152 (149–152 (GEKD)) interacts with ATP. Residue Q155 participates in (R)-pantoate binding. Residues V178 and 186–189 (LSSR) each bind ATP.

This sequence belongs to the pantothenate synthetase family. As to quaternary structure, homodimer.

Its subcellular location is the cytoplasm. The catalysed reaction is (R)-pantoate + beta-alanine + ATP = (R)-pantothenate + AMP + diphosphate + H(+). Its pathway is cofactor biosynthesis; (R)-pantothenate biosynthesis; (R)-pantothenate from (R)-pantoate and beta-alanine: step 1/1. Catalyzes the condensation of pantoate with beta-alanine in an ATP-dependent reaction via a pantoyl-adenylate intermediate. The polypeptide is Pantothenate synthetase (Pseudomonas paraeruginosa (strain DSM 24068 / PA7) (Pseudomonas aeruginosa (strain PA7))).